The chain runs to 130 residues: Cholecystokinin (130 aa).

An N-terminal signal peptide occupies residues 1–20 (MYSGICICVFLAVLSASSFG). Positions 21–48 (QQTAGSHNGNPLAAELEQSLTEHHRHVR) are excised as a propeptide. A disordered region spans residues 40–59 (LTEHHRHVRAPSSAGPLKPV). Sulfotyrosine is present on Y112. Position 118 is a phenylalanine amide (F118). A propeptide spanning residues 122-130 (SAEEYEYSS) is cleaved from the precursor. Sulfotyrosine is present on residues Y126 and Y128.

The protein belongs to the gastrin/cholecystokinin family. The precursor is cleaved by proteases to produce a number of active cholecystokinins. In terms of tissue distribution, highly concentrated in the duodenum. Also localized in more distal parts of the small intestine.

It localises to the secreted. In terms of biological role, this peptide hormone induces gall bladder contraction and the release of pancreatic enzymes in the gut. Its function in the brain is not clear. The protein is Cholecystokinin (CCK) of Struthio camelus (Common ostrich).